Consider the following 460-residue polypeptide: ATP synthase subunit beta (460 aa).

150–157 (GGAGVGKT) lines the ATP pocket.

Belongs to the ATPase alpha/beta chains family. F-type ATPases have 2 components, CF(1) - the catalytic core - and CF(0) - the membrane proton channel. CF(1) has five subunits: alpha(3), beta(3), gamma(1), delta(1), epsilon(1). CF(0) has three main subunits: a(1), b(2) and c(9-12). The alpha and beta chains form an alternating ring which encloses part of the gamma chain. CF(1) is attached to CF(0) by a central stalk formed by the gamma and epsilon chains, while a peripheral stalk is formed by the delta and b chains.

The protein localises to the cell inner membrane. The catalysed reaction is ATP + H2O + 4 H(+)(in) = ADP + phosphate + 5 H(+)(out). Its function is as follows. Produces ATP from ADP in the presence of a proton gradient across the membrane. The catalytic sites are hosted primarily by the beta subunits. This chain is ATP synthase subunit beta, found in Yersinia enterocolitica serotype O:8 / biotype 1B (strain NCTC 13174 / 8081).